A 174-amino-acid chain; its full sequence is Ribosome maturation factor RimM (174 aa).

Residues 95–174 (DDEFYWRDLI…QIQVEWPSDF (80 aa)) form the PRC barrel domain.

This sequence belongs to the RimM family. As to quaternary structure, binds ribosomal protein uS19.

It localises to the cytoplasm. In terms of biological role, an accessory protein needed during the final step in the assembly of 30S ribosomal subunit, possibly for assembly of the head region. Essential for efficient processing of 16S rRNA. May be needed both before and after RbfA during the maturation of 16S rRNA. It has affinity for free ribosomal 30S subunits but not for 70S ribosomes. The chain is Ribosome maturation factor RimM from Idiomarina loihiensis (strain ATCC BAA-735 / DSM 15497 / L2-TR).